A 318-amino-acid chain; its full sequence is UDP-N-acetylenolpyruvoylglucosamine reductase (318 aa).

The region spanning 38 to 204 (IGGVCPVIVE…LGIEILLKEG (167 aa)) is the FAD-binding PCMH-type domain. Residue R182 is part of the active site. Residues 212–229 (SLKDKRDRRNSSQPENKK) show a composition bias toward basic and acidic residues. Residues 212-232 (SLKDKRDRRNSSQPENKKSAG) are disordered. Catalysis depends on S233, which acts as the Proton donor. The active site involves E310.

The protein belongs to the MurB family. FAD serves as cofactor.

It is found in the cytoplasm. It catalyses the reaction UDP-N-acetyl-alpha-D-muramate + NADP(+) = UDP-N-acetyl-3-O-(1-carboxyvinyl)-alpha-D-glucosamine + NADPH + H(+). The protein operates within cell wall biogenesis; peptidoglycan biosynthesis. Its function is as follows. Cell wall formation. This is UDP-N-acetylenolpyruvoylglucosamine reductase from Leptospira interrogans serogroup Icterohaemorrhagiae serovar Lai (strain 56601).